Here is a 99-residue protein sequence, read N- to C-terminus: Protein dpy-30 homolog (99 aa).

Methionine 1 carries the N-acetylmethionine modification. A disordered region spans residues 1–26 (MEPEQMLEGQTQVAENPHSEYGLTDN). The residue at position 19 (serine 19) is a Phosphoserine. Lysine 35 carries the N6-acetyllysine; alternate modification. Residue lysine 35 forms a Glycyl lysine isopeptide (Lys-Gly) (interchain with G-Cter in SUMO2); alternate linkage.

This sequence belongs to the dpy-30 family. Homodimer. Core component of several methyltransferase-containing complexes including MLL1/MLL, MLL2/3 (also named ASCOM complex) and MLL4/WBP7. Each complex is at least composed of ASH2L, RBBP5, WDR5, DPY30, one or more specific histone methyltransferases (KMT2A/MLL1, KMT2D/MLL2, KMT2C/MLL3 and KMT2B/MLL4), and the facultative components MEN1, HCFC1, HCFC2, NCOA6, KDM6A, PAXIP1/PTIP, PAGR1 and alpha- and beta-tubulin. Interacts with ASH2L; the interaction is direct. Interacts with ARFGEF1. Component of the SET1 complex, at least composed of the catalytic subunit (SETD1A or SETD1B), WDR5, WDR82, RBBP5, ASH2L/ASH2, CXXC1/CFP1, HCFC1 and DPY30.

The protein localises to the nucleus. It localises to the golgi apparatus. Its subcellular location is the trans-Golgi network. As part of the MLL1/MLL complex, involved in the methylation of histone H3 at 'Lys-4', particularly trimethylation. Histone H3 'Lys-4' methylation represents a specific tag for epigenetic transcriptional activation. May play some role in histone H3 acetylation. In embryonic stem cells, may play a crucial role in retinoic acid-induced differentiation along the neural lineage, regulating gene induction and H3 'Lys-4' methylation at key developmental loci. May also play an indirect or direct role in endosomal transport. This chain is Protein dpy-30 homolog (DPY30), found in Bos taurus (Bovine).